The chain runs to 200 residues: Chromophore lyase CpcT/CpeT 2 (200 aa).

The protein belongs to the CpcT/CpeT biliprotein lyase family.

Functionally, covalently attaches a chromophore to Cys residue(s) of phycobiliproteins. The chain is Chromophore lyase CpcT/CpeT 2 from Microcystis aeruginosa (strain NIES-843 / IAM M-2473).